Consider the following 470-residue polypeptide: Putative bifunctional phosphatase/peptidyl-prolyl cis-trans isomerase (470 aa).

The Nucleophile role is filled by Asp22. Mg(2+)-binding residues include Asp22, Asp24, and Asp221. The PPIase cyclophilin-type domain maps to 286-468 (TGPKVTIKTN…EDVIIETIEV (183 aa)).

The protein in the C-terminal section; belongs to the cyclophilin-type PPIase family. PPIL1 subfamily. Mg(2+) is required as a cofactor.

The enzyme catalyses [protein]-peptidylproline (omega=180) = [protein]-peptidylproline (omega=0). In terms of biological role, PPIases accelerate the folding of proteins. It catalyzes the cis-trans isomerization of proline imidic peptide bonds in oligopeptides. This Streptococcus pyogenes serotype M6 (strain ATCC BAA-946 / MGAS10394) protein is Putative bifunctional phosphatase/peptidyl-prolyl cis-trans isomerase.